The chain runs to 140 residues: MARFLIVEARFYDHLNDMLVAGARAALEAEGHEAEVLTVPGALEVPGAIAMAAENGEFDGFVAIGVVIRGETYHFEIVAGESARGILALTMDGIAIGNGILTTENEEQALERADPARKDKGGEAAKAAIALLKLQDRFGA.

5-amino-6-(D-ribitylamino)uracil-binding positions include F11, 42–44, and 66–68; these read ALE and VVI. 71–72 serves as a coordination point for (2S)-2-hydroxy-3-oxobutyl phosphate; sequence ET. H74 functions as the Proton donor in the catalytic mechanism. N98 serves as a coordination point for 5-amino-6-(D-ribitylamino)uracil. (2S)-2-hydroxy-3-oxobutyl phosphate is bound at residue R112.

Belongs to the DMRL synthase family.

It catalyses the reaction (2S)-2-hydroxy-3-oxobutyl phosphate + 5-amino-6-(D-ribitylamino)uracil = 6,7-dimethyl-8-(1-D-ribityl)lumazine + phosphate + 2 H2O + H(+). Its pathway is cofactor biosynthesis; riboflavin biosynthesis; riboflavin from 2-hydroxy-3-oxobutyl phosphate and 5-amino-6-(D-ribitylamino)uracil: step 1/2. Functionally, catalyzes the formation of 6,7-dimethyl-8-ribityllumazine by condensation of 5-amino-6-(D-ribitylamino)uracil with 3,4-dihydroxy-2-butanone 4-phosphate. This is the penultimate step in the biosynthesis of riboflavin. This is 6,7-dimethyl-8-ribityllumazine synthase from Erythrobacter litoralis (strain HTCC2594).